Reading from the N-terminus, the 197-residue chain is SIGLEC family-like protein 1 (197 aa).

A helical membrane pass occupies residues 118–138; sequence GAIYAGIVIALLFLCLLPLIV. A disordered region spans residues 160–179; the sequence is VRASQELEMSLKPEEPGKPV. The segment covering 162–176 has biased composition (basic and acidic residues); that stretch reads ASQELEMSLKPEEPG.

The protein localises to the membrane. The chain is SIGLEC family-like protein 1 (SIGLECL1) from Homo sapiens (Human).